We begin with the raw amino-acid sequence, 136 residues long: Protein PsiE (136 aa).

Transmembrane regions (helical) follow at residues 15 to 35 (ILQTVLNLGLLCLGLILVVFL), 55 to 75 (YELVEGLVVYFLYFEFIALIV), 82 to 102 (FHFPLRYFVYIGITAIVRLII), and 108 to 128 (PLDVLIYSAAILLLVITLWLC).

This sequence belongs to the PsiE family.

The protein localises to the cell inner membrane. This is Protein PsiE from Escherichia coli (strain UTI89 / UPEC).